The sequence spans 501 residues: MRSDAIKRRLYSKAIFIIPFWILSIALWFSSGSVYKIDSCMIDNNKTTCIPYTISKYTDFNSNSQLNQFNSSFILFQIIPINILCFLPLLGYMYILASVLKVDLVKKAFTIFGIMMLITIPLFLIVSICIFPLNLRETLCSDLKNGFIKSNIVDKGNTTICNLKESFNYFKGSFSDTTTTTTTTTTLEWGITYNWYFIIATIVFSFSMLVIVLVLLIKDANTLNNGDGQNYSLFEQENDENFEDDDPNDVIESGLDLWGRNIWYNYTKKPMNSILLSIFQLFYIGSYFSLYYFGFKFNLIPFFINLIILFISYYNLIFDGIRDNYLIKRMYRERSNDVNQFIERVKKIKPKVAIVKKPNKEGGKSSSGGGGGGGGGIDDGIEAILEPRLLKSWLDQSELDYLMINDDDDKYKPIVELTIIEDFKTTSQLPIDAISLLFVKTDLSNYYIITNKKKRFIQINRGLHSFLVLIGLSGLFNILYLKRLILKKSITIKTLFEYNNR.

Helical transmembrane passes span 14-34, 73-93, 111-131, 197-217, 274-294, 297-317, and 466-486; these read AIFIIPFWILSIALWFSSGSV, FILFQIIPINILCFLPLLGYM, IFGIMMLITIPLFLIVSICIF, FIIATIVFSFSMLVIVLVLLI, ILLSIFQLFYIGSYFSLYYFG, FNLIPFFINLIILFISYYNLI, and FLVLIGLSGLFNILYLKRLIL.

Its subcellular location is the membrane. This is an uncharacterized protein from Dictyostelium discoideum (Social amoeba).